We begin with the raw amino-acid sequence, 132 residues long: MKRLLPSLRTKKRYLAFELISEEPAGRGDIVKEVISSASSLLGDITTSDCDIRVLGFEAGKGIIQCSHTRVKETRAALATLTRVNGKRATLHVLGASGTVKKATEKFLKDYTVFEPEIHEKRDSRKTPGKVD.

Belongs to the eukaryotic/archaeal RNase P protein component 2 family. As to quaternary structure, consists of a catalytic RNA component and at least 4-5 protein subunits.

It localises to the cytoplasm. It catalyses the reaction Endonucleolytic cleavage of RNA, removing 5'-extranucleotides from tRNA precursor.. Its function is as follows. Part of ribonuclease P, a protein complex that generates mature tRNA molecules by cleaving their 5'-ends. In Methanosarcina acetivorans (strain ATCC 35395 / DSM 2834 / JCM 12185 / C2A), this protein is Ribonuclease P protein component 2.